The primary structure comprises 126 residues: UPF0102 protein PMT_0624 (126 aa).

This sequence belongs to the UPF0102 family.

The polypeptide is UPF0102 protein PMT_0624 (Prochlorococcus marinus (strain MIT 9313)).